Here is a 343-residue protein sequence, read N- to C-terminus: Farnesyl pyrophosphate synthase (343 aa).

3 residues coordinate isopentenyl diphosphate: K49, R52, and Q87. Positions 94 and 98 each coordinate Mg(2+). Residue R103 coordinates dimethylallyl diphosphate. Residue R104 participates in isopentenyl diphosphate binding. Dimethylallyl diphosphate-binding residues include K191, T192, Q230, K247, and K256.

This sequence belongs to the FPP/GGPP synthase family. It depends on Mg(2+) as a cofactor. Expressed both in apical and sub-apical cells of glandular secretory trichomes.

The protein resides in the cytoplasm. It is found in the nucleus. The catalysed reaction is isopentenyl diphosphate + dimethylallyl diphosphate = (2E)-geranyl diphosphate + diphosphate. The enzyme catalyses isopentenyl diphosphate + (2E)-geranyl diphosphate = (2E,6E)-farnesyl diphosphate + diphosphate. The protein operates within isoprenoid biosynthesis; farnesyl diphosphate biosynthesis; farnesyl diphosphate from geranyl diphosphate and isopentenyl diphosphate: step 1/1. Its pathway is sesquiterpene biosynthesis. It functions in the pathway isoprenoid biosynthesis; geranyl diphosphate biosynthesis; geranyl diphosphate from dimethylallyl diphosphate and isopentenyl diphosphate: step 1/1. In terms of biological role, involved in the biosynthesis of the antimalarial endoperoxide artemisinin. Catalyzes the sequential condensation of isopentenyl pyrophosphate with the allylic pyrophosphates, dimethylallyl pyrophosphate, and then with the resultant geranylpyrophosphate to the ultimate product farnesyl pyrophosphate. Promotes anti-malarial and antimicrobial (toward Gram-positive bacteria B.subtilis and S.aureus) activities of plant crude extract probably by triggering artemisinin levels. The polypeptide is Farnesyl pyrophosphate synthase (Artemisia annua (Sweet wormwood)).